A 98-amino-acid chain; its full sequence is DNA-binding protein Fis (98 aa).

Positions 74-93 form a DNA-binding region, H-T-H motif; sequence QTRAAQMMGINRGTLRKKLK.

It belongs to the transcriptional regulatory Fis family. Homodimer.

In terms of biological role, activates ribosomal RNA transcription. Plays a direct role in upstream activation of rRNA promoters. The polypeptide is DNA-binding protein Fis (Sodalis glossinidius (strain morsitans)).